Reading from the N-terminus, the 285-residue chain is Ribosomal RNA small subunit methyltransferase H (285 aa).

Residues 34 to 36 (AGH), aspartate 51, phenylalanine 75, aspartate 96, and histidine 103 each bind S-adenosyl-L-methionine. Positions 258 to 285 (PLVPSEKEAAQNPRARSAKLRAAEKEAP) are disordered.

Belongs to the methyltransferase superfamily. RsmH family.

Its subcellular location is the cytoplasm. The enzyme catalyses cytidine(1402) in 16S rRNA + S-adenosyl-L-methionine = N(4)-methylcytidine(1402) in 16S rRNA + S-adenosyl-L-homocysteine + H(+). Its function is as follows. Specifically methylates the N4 position of cytidine in position 1402 (C1402) of 16S rRNA. This Thermus thermophilus (strain ATCC BAA-163 / DSM 7039 / HB27) protein is Ribosomal RNA small subunit methyltransferase H.